We begin with the raw amino-acid sequence, 162 residues long: NADH-quinone oxidoreductase subunit I (162 aa).

4Fe-4S ferredoxin-type domains follow at residues 53-83 and 93-122; these read LRRY…IESE and TRYD…ETRV. [4Fe-4S] cluster is bound by residues Cys63, Cys66, Cys69, Cys73, Cys102, Cys105, Cys108, and Cys112.

The protein belongs to the complex I 23 kDa subunit family. As to quaternary structure, NDH-1 is composed of 14 different subunits. Subunits NuoA, H, J, K, L, M, N constitute the membrane sector of the complex. The cofactor is [4Fe-4S] cluster.

The protein resides in the cell inner membrane. The enzyme catalyses a quinone + NADH + 5 H(+)(in) = a quinol + NAD(+) + 4 H(+)(out). Functionally, NDH-1 shuttles electrons from NADH, via FMN and iron-sulfur (Fe-S) centers, to quinones in the respiratory chain. The immediate electron acceptor for the enzyme in this species is believed to be ubiquinone. Couples the redox reaction to proton translocation (for every two electrons transferred, four hydrogen ions are translocated across the cytoplasmic membrane), and thus conserves the redox energy in a proton gradient. In Nitrosomonas europaea (strain ATCC 19718 / CIP 103999 / KCTC 2705 / NBRC 14298), this protein is NADH-quinone oxidoreductase subunit I.